We begin with the raw amino-acid sequence, 135 residues long: Ribosome-binding factor A (135 aa).

This sequence belongs to the RbfA family. In terms of assembly, monomer. Binds 30S ribosomal subunits, but not 50S ribosomal subunits or 70S ribosomes.

It localises to the cytoplasm. Its function is as follows. One of several proteins that assist in the late maturation steps of the functional core of the 30S ribosomal subunit. Associates with free 30S ribosomal subunits (but not with 30S subunits that are part of 70S ribosomes or polysomes). Required for efficient processing of 16S rRNA. May interact with the 5'-terminal helix region of 16S rRNA. This chain is Ribosome-binding factor A, found in Dinoroseobacter shibae (strain DSM 16493 / NCIMB 14021 / DFL 12).